The sequence spans 320 residues: Stress-induced-phosphoprotein 1 (320 aa).

TPR repeat units lie at residues 5–38, 40–72, 80–113, 140–173, 175–207, and 208–241; these read AIAE…DPSN, TFYN…GRET, AKAM…FRDP, AQEE…DPEN, ILYS…DSKF, and IKGY…DPSN. The segment at 241-269 is disordered; sequence NEEAREGVRNCLRSNDEDPEKAKERSLAD. A compositionally biased stretch (basic and acidic residues) spans 242–269; that stretch reads EEAREGVRNCLRSNDEDPEKAKERSLAD. The STI1 domain occupies 269 to 308; that stretch reads DPEVQEILRDPGMRMILEQMSNDPGAVREHLKNPEIFQKL.

As to quaternary structure, forms a complex with hsp-1/hsp70 and daf-21/hsp90. Interacts with daf-21/hsp90 (via the C-terminal MEEVD pentapeptide). In terms of tissue distribution, expressed ubiquitously in the whole body. Detected predominantly in the pharyngeal muscles, vulva epithelial cells, striated body-wall muscles, spermathecae and intestinal cell ring. Also observed in the tail regions of hermaphrodite and in the sensory rays and spicules of males.

The protein localises to the cytoplasm. Its function is as follows. Plays a role in gonad development. Up-regulates longevity and thermotolerance. Binds daf-21/hsp90 and inhibits its ATPase activity. This Caenorhabditis elegans protein is Stress-induced-phosphoprotein 1.